A 259-amino-acid chain; its full sequence is uncharacterized protein (259 aa).

E46 is an active-site residue.

It belongs to the PhzF family.

This is an uncharacterized protein from Pseudomonas aeruginosa (strain ATCC 15692 / DSM 22644 / CIP 104116 / JCM 14847 / LMG 12228 / 1C / PRS 101 / PAO1).